A 104-amino-acid polypeptide reads, in one-letter code: Large ribosomal subunit protein uL24 (104 aa).

Belongs to the universal ribosomal protein uL24 family. In terms of assembly, part of the 50S ribosomal subunit.

Its function is as follows. One of two assembly initiator proteins, it binds directly to the 5'-end of the 23S rRNA, where it nucleates assembly of the 50S subunit. Functionally, one of the proteins that surrounds the polypeptide exit tunnel on the outside of the subunit. The sequence is that of Large ribosomal subunit protein uL24 from Shigella dysenteriae serotype 1 (strain Sd197).